Here is a 104-residue protein sequence, read N- to C-terminus: UPF0213 protein in VLF1-GP41 intergenic region (104 aa).

The GIY-YIG domain maps to 9-89 (KVWCVYILRQ…SKYFKLRLIK (81 aa)).

This sequence belongs to the UPF0213 family.

The polypeptide is UPF0213 protein in VLF1-GP41 intergenic region (Autographa californica nuclear polyhedrosis virus (AcMNPV)).